A 501-amino-acid chain; its full sequence is Cytochrome P450 monooxygenase notH (501 aa).

The helical transmembrane segment at 11–31 threads the bilayer; sequence LGLESVGWVLGLLTTSILYLF. Residue Asn-298 is glycosylated (N-linked (GlcNAc...) asparagine). Cys-442 contributes to the heme binding site.

This sequence belongs to the cytochrome P450 family. Heme is required as a cofactor.

It localises to the membrane. The protein operates within alkaloid biosynthesis. In terms of biological role, cytochrome P450 monooxygenase; part of the gene cluster that mediates the biosynthesis of notoamide, a fungal indole alkaloid that belongs to a family of natural products containing a characteristic bicyclo[2.2.2]diazaoctane core. The first step of notoamide biosynthesis involves coupling of L-proline and L-tryptophan by the bimodular NRPS notE, to produce cyclo-L-tryptophan-L-proline called brevianamide F. The reverse prenyltransferase notF then acts as a deoxybrevianamide E synthase and converts brevianamide F to deoxybrevianamide E via reverse prenylation at C-2 of the indole ring leading to the bicyclo[2.2.2]diazaoctane core. Deoxybrevianamide E is further hydroxylated at C-6 of the indole ring, likely catalyzed by the cytochrome P450 monooxygenase notG, to yield 6-hydroxy-deoxybrevianamide E. 6-hydroxy-deoxybrevianamide E is a specific substrate of the prenyltransferase notC for normal prenylation at C-7 to produce 6-hydroxy-7-prenyl-deoxybrevianamide, also called notoamide S. As the proposed pivotal branching point in notoamide biosynthesis, notoamide S can be diverted to notoamide E through an oxidative pyran ring closure putatively catalyzed by either notH cytochrome P450 monooxygenase or the notD FAD-linked oxidoreductase. This step would be followed by an indole 2,3-epoxidation-initiated pinacol-like rearrangement catalyzed by the notB FAD-dependent monooxygenase leading to the formation of notoamide C and notoamide D. On the other hand notoamide S is converted to notoamide T by notH (or notD), a bifunctional oxidase that also functions as the intramolecular Diels-Alderase responsible for generation of (+)-notoamide T. To generate antipodal (-)-notoaminide T, notH' (or notD') in Aspergillus versicolor is expected to catalyze a Diels-Alder reaction leading to the opposite stereochemistry. The remaining oxidoreductase notD (or notH) likely catalyzes the oxidative pyran ring formation to yield (+)-stephacidin A. The FAD-dependent monooxygenase notI is highly similar to notB and is predicted to catalyze a similar conversion from (+)-stephacidin A to (-)-notoamide B via the 2,3-epoxidation of (+)-stephacidin A followed by a pinacol-type rearrangement. Finally, it remains unclear which enzyme could be responsible for the final hydroxylation steps leading to notoamide A and sclerotiamide. In Aspergillus sp. (strain MF297-2), this protein is Cytochrome P450 monooxygenase notH.